The following is a 309-amino-acid chain: Probable manganese-dependent inorganic pyrophosphatase (309 aa).

Mn(2+)-binding residues include H9, D13, D15, D75, H97, and D149.

This sequence belongs to the PPase class C family. Requires Mn(2+) as cofactor.

The protein localises to the cytoplasm. The catalysed reaction is diphosphate + H2O = 2 phosphate + H(+). The protein is Probable manganese-dependent inorganic pyrophosphatase of Staphylococcus haemolyticus (strain JCSC1435).